A 64-amino-acid chain; its full sequence is Large ribosomal subunit protein bL28C (64 aa).

Belongs to the bacterial ribosomal protein bL28 family.

The chain is Large ribosomal subunit protein bL28C from Mycobacterium tuberculosis (strain ATCC 25618 / H37Rv).